The primary structure comprises 291 residues: Beta-lactamase CTX-M-25 (291 aa).

An N-terminal signal peptide occupies residues 1–30; that stretch reads MMRKSVRRAMLMTTACVSLLLASVPLCAQA. Serine 73 functions as the Nucleophile; acyl-ester intermediate in the catalytic mechanism. 4 residues coordinate a beta-lactam: lysine 76, serine 133, glutamate 169, and serine 240.

The protein belongs to the class-A beta-lactamase family. In terms of assembly, monomer.

The protein resides in the secreted. The catalysed reaction is a beta-lactam + H2O = a substituted beta-amino acid. Inhibited by the beta-lactamase-blocking agents clavulanic acid and tazobactam; in the DH10B strain. Its function is as follows. Extended-spectrum beta-lactamase (ESBL) which confers resistance to penicillins, as well as first, second and third-generation cephalosporins. Has cefotaxime-hydrolyzing activity. Inactive against cephalosporin antibiotic, cefoxitin, and the carbapenem, imipenem. This is Beta-lactamase CTX-M-25 from Escherichia coli.